Reading from the N-terminus, the 600-residue chain is Aspartate--tRNA(Asp/Asn) ligase (600 aa).

E187 contacts L-aspartate. Residues Q211–K214 are aspartate. L-aspartate is bound by residues R233 and H463. R233–E235 is an ATP binding site. Position 497 (E497) interacts with ATP. Residue R504 coordinates L-aspartate. G549–R552 lines the ATP pocket.

It belongs to the class-II aminoacyl-tRNA synthetase family. Type 1 subfamily. In terms of assembly, homodimer.

Its subcellular location is the cytoplasm. It carries out the reaction tRNA(Asx) + L-aspartate + ATP = L-aspartyl-tRNA(Asx) + AMP + diphosphate. Functionally, aspartyl-tRNA synthetase with relaxed tRNA specificity since it is able to aspartylate not only its cognate tRNA(Asp) but also tRNA(Asn). Reaction proceeds in two steps: L-aspartate is first activated by ATP to form Asp-AMP and then transferred to the acceptor end of tRNA(Asp/Asn). The chain is Aspartate--tRNA(Asp/Asn) ligase from Wolbachia sp. subsp. Brugia malayi (strain TRS).